Here is a 175-residue protein sequence, read N- to C-terminus: Adenine phosphoribosyltransferase (175 aa).

This sequence belongs to the purine/pyrimidine phosphoribosyltransferase family. As to quaternary structure, homodimer.

It localises to the cytoplasm. The catalysed reaction is AMP + diphosphate = 5-phospho-alpha-D-ribose 1-diphosphate + adenine. It functions in the pathway purine metabolism; AMP biosynthesis via salvage pathway; AMP from adenine: step 1/1. Functionally, catalyzes a salvage reaction resulting in the formation of AMP, that is energically less costly than de novo synthesis. In Synechococcus sp. (strain JA-2-3B'a(2-13)) (Cyanobacteria bacterium Yellowstone B-Prime), this protein is Adenine phosphoribosyltransferase.